The chain runs to 457 residues: Transcription factor PCF7 (457 aa).

The stretch at 58 to 84 (STLHYLLQEKERAQQAHEQLQIYQQQQ) forms a coiled coil. Residues 95-119 (RQPASRGPGGGGGGGDGGGSSGEST) form a disordered region. Over residues 101 to 115 (GPGGGGGGGDGGGSS) the composition is skewed to gly residues. Positions 140-198 (RKDRHSKVCTARGLRDRRVRLAAHTAIRFYDVQDRLGYDRPSKAVDWLMRNAKAAIDEL) constitute a TCP domain. 2 disordered regions span residues 199–231 (PDRA…GFGN) and 263–299 (KSLF…SNQQ). Composition is skewed to low complexity over residues 210-225 (AAST…ATST) and 268-278 (SSSTASGAASA).

In terms of assembly, forms homodimers and heterodimers.

It localises to the nucleus. In terms of biological role, transcription activator. Binds the promoter core sequence 5'-GGNCC-3'. This chain is Transcription factor PCF7 (PCF7), found in Oryza sativa subsp. japonica (Rice).